A 135-amino-acid polypeptide reads, in one-letter code: UPF0355 protein MRSA252 (135 aa).

This sequence belongs to the UPF0355 family.

In Staphylococcus aureus (strain MRSA252), this protein is UPF0355 protein MRSA252.